Here is a 340-residue protein sequence, read N- to C-terminus: N-acetyl-gamma-glutamyl-phosphate reductase (340 aa).

Residue Cys-146 is part of the active site.

Belongs to the NAGSA dehydrogenase family. Type 1 subfamily.

It is found in the cytoplasm. The enzyme catalyses N-acetyl-L-glutamate 5-semialdehyde + phosphate + NADP(+) = N-acetyl-L-glutamyl 5-phosphate + NADPH + H(+). Its pathway is amino-acid biosynthesis; L-arginine biosynthesis; N(2)-acetyl-L-ornithine from L-glutamate: step 3/4. In terms of biological role, catalyzes the NADPH-dependent reduction of N-acetyl-5-glutamyl phosphate to yield N-acetyl-L-glutamate 5-semialdehyde. This is N-acetyl-gamma-glutamyl-phosphate reductase from Rubrobacter xylanophilus (strain DSM 9941 / JCM 11954 / NBRC 16129 / PRD-1).